Reading from the N-terminus, the 308-residue chain is tRNA dimethylallyltransferase (308 aa).

Gly-14 to Thr-21 provides a ligand contact to ATP. Position 16–21 (Thr-16–Thr-21) interacts with substrate. 3 interaction with substrate tRNA regions span residues Asp-39–Leu-42, Gln-163–Arg-167, and Arg-244–Arg-249.

This sequence belongs to the IPP transferase family. Monomer. Mg(2+) serves as cofactor.

It catalyses the reaction adenosine(37) in tRNA + dimethylallyl diphosphate = N(6)-dimethylallyladenosine(37) in tRNA + diphosphate. In terms of biological role, catalyzes the transfer of a dimethylallyl group onto the adenine at position 37 in tRNAs that read codons beginning with uridine, leading to the formation of N6-(dimethylallyl)adenosine (i(6)A). The chain is tRNA dimethylallyltransferase from Shewanella baltica (strain OS223).